The following is a 223-amino-acid chain: uncharacterized protein (223 aa).

One can recognise a Tyr recombinase domain in the interval 29–220 (KQTYKMFKED…AKEILKNIGD (192 aa)). Catalysis depends on residues Arg71, Lys103, His170, Arg173, and His196. The active-site O-(3'-phospho-DNA)-tyrosine intermediate is Tyr205.

Belongs to the 'phage' integrase family.

This is an uncharacterized protein from Methanocaldococcus jannaschii (strain ATCC 43067 / DSM 2661 / JAL-1 / JCM 10045 / NBRC 100440) (Methanococcus jannaschii).